We begin with the raw amino-acid sequence, 274 residues long: NAD(P)H dehydrogenase [quinone] 1 (274 aa).

FAD-binding positions include His12, 18 to 19 (FN), and Gln67. Ser82 bears the Phosphoserine mark. An FAD-binding site is contributed by 104-107 (LQWF). A substrate-binding site is contributed by 126–128 (AYT). FAD contacts are provided by residues 148-151 (TTGG), Tyr156, and Arg201. Positions 225 to 274 (PSSLFDLNFQAGFLMKKEVQDEEKNKKFGLSVGHHLGKSIPTDNQIKARK) are important for apoenzyme conformational stability. Residues Lys250 and Lys251 each participate in a glycyl lysine isopeptide (Lys-Gly) (interchain with G-Cter in SUMO2) cross-link.

Belongs to the NAD(P)H dehydrogenase (quinone) family. In terms of assembly, homodimer. Interacts with PDLIM4 isoform 2; this interaction stabilizes PDLIM4 isoform 2 in response to oxidative stress and protects it from ubiquitin-independent degradation by the core 20S proteasome. Interacts with TP73 (via SAM domain); this interaction is NADH-dependent, stabilizes TP73 in response to oxidative stress and protects it from ubiquitin-independent degradation by the 20S proteasome. Interacts with TP53; this interaction is NADH-dependent, stabilizes TP53 in response to oxidative stress and protects it from ubiquitin-independent degradation by the 20S proteasome. FAD is required as a cofactor.

Its subcellular location is the cytoplasm. It is found in the cytosol. It carries out the reaction a quinone + NADH + H(+) = a quinol + NAD(+). The catalysed reaction is a quinone + NADPH + H(+) = a quinol + NADP(+). The enzyme catalyses ubiquinone-10 + NADH + H(+) = ubiquinol-10 + NAD(+). It catalyses the reaction menadione + NADH + H(+) = menadiol + NAD(+). Its activity is regulated as follows. Inhibited by dicoumarol. Functionally, flavin-containing quinone reductase that catalyzes two-electron reduction of quinones to hydroquinones using either NADH or NADPH as electron donors. In a ping-pong kinetic mechanism, the electrons are sequentially transferred from NAD(P)H to flavin cofactor and then from reduced flavin to the quinone, bypassing the formation of semiquinone and reactive oxygen species. Regulates cellular redox state primarily through quinone detoxification. Reduces components of plasma membrane redox system such as coenzyme Q and vitamin quinones, producing antioxidant hydroquinone forms. In the process may function as superoxide scavenger to prevent hydroquinone oxidation and facilitate excretion. Alternatively, can activate quinones and their derivatives by generating redox reactive hydroquinones with DNA cross-linking antitumor potential. Acts as a gatekeeper of the core 20S proteasome known to degrade proteins with unstructured regions. Upon oxidative stress, interacts with tumor suppressors TP53 and TP73 in a NADH-dependent way and inhibits their ubiquitin-independent degradation by the 20S proteasome. This chain is NAD(P)H dehydrogenase [quinone] 1, found in Homo sapiens (Human).